The primary structure comprises 257 residues: Imidazole glycerol phosphate synthase subunit HisF (257 aa).

Catalysis depends on residues Asp-11 and Asp-130.

Belongs to the HisA/HisF family. As to quaternary structure, heterodimer of HisH and HisF.

It localises to the cytoplasm. It carries out the reaction 5-[(5-phospho-1-deoxy-D-ribulos-1-ylimino)methylamino]-1-(5-phospho-beta-D-ribosyl)imidazole-4-carboxamide + L-glutamine = D-erythro-1-(imidazol-4-yl)glycerol 3-phosphate + 5-amino-1-(5-phospho-beta-D-ribosyl)imidazole-4-carboxamide + L-glutamate + H(+). It participates in amino-acid biosynthesis; L-histidine biosynthesis; L-histidine from 5-phospho-alpha-D-ribose 1-diphosphate: step 5/9. Functionally, IGPS catalyzes the conversion of PRFAR and glutamine to IGP, AICAR and glutamate. The HisF subunit catalyzes the cyclization activity that produces IGP and AICAR from PRFAR using the ammonia provided by the HisH subunit. The sequence is that of Imidazole glycerol phosphate synthase subunit HisF from Bradyrhizobium diazoefficiens (strain JCM 10833 / BCRC 13528 / IAM 13628 / NBRC 14792 / USDA 110).